We begin with the raw amino-acid sequence, 361 residues long: Ribosomal RNA large subunit methyltransferase M (361 aa).

S-adenosyl-L-methionine-binding positions include Ser187, 220–223 (CPGG), Asp239, Asp259, and Asp276. Residue Lys305 is the Proton acceptor of the active site.

Belongs to the class I-like SAM-binding methyltransferase superfamily. RNA methyltransferase RlmE family. RlmM subfamily. As to quaternary structure, monomer.

It is found in the cytoplasm. It catalyses the reaction cytidine(2498) in 23S rRNA + S-adenosyl-L-methionine = 2'-O-methylcytidine(2498) in 23S rRNA + S-adenosyl-L-homocysteine + H(+). Functionally, catalyzes the 2'-O-methylation at nucleotide C2498 in 23S rRNA. This chain is Ribosomal RNA large subunit methyltransferase M, found in Shewanella baltica (strain OS185).